The primary structure comprises 542 residues: Organic anion transporter 3 (542 aa).

Residues 1 to 9 (MTFSEILDR) are Cytoplasmic-facing. At Ser4 the chain carries Phosphoserine. Residues 10–30 (VGSMGPFQFLHVALLGFPILG) traverse the membrane as a helical segment. The Extracellular portion of the chain corresponds to 31-123 (MANHNLLQIF…LVCSSNKLKE (93 aa)). N-linked (GlcNAc...) asparagine glycosylation occurs at Asn86. Residues 124 to 144 (MAQSIFMAGILIGGLVLGDLS) traverse the membrane as a helical segment. Over 145-150 (DRFGRK) the chain is Cytoplasmic. The chain crosses the membrane as a helical span at residues 151 to 171 (PILTCCYLLLAASGSSTAFSP). Topologically, residues 172-176 (TLPIY) are extracellular. The chain crosses the membrane as a helical span at residues 177–197 (MVFRFLCGFSISGISLSTVIL). Topologically, residues 198–212 (NVEWVPTKMRAITST) are cytoplasmic. The chain crosses the membrane as a helical span at residues 213-233 (AIGYCYTIGQFILPGLAYAIP). The Extracellular portion of the chain corresponds to 234–236 (QWR). A helical membrane pass occupies residues 237 to 257 (WLQLTVSVPYFIFSLLSWWIP). Residues 258-327 (ESIRWLVLAG…FRTPILRRVT (70 aa)) are Cytoplasmic-facing. The chain crosses the membrane as a helical span at residues 328 to 348 (LCLSLAWFATGFAYYSLAMGV). The Extracellular segment spans residues 349 to 354 (EEFGVN). The helical transmembrane segment at 355–375 (IYILQIIFGGVDIPAKFITIL) threads the bilayer. The Cytoplasmic segment spans residues 376–389 (SLSYLGRHITQGAA). Residues 390–410 (LILAGAAILSLIFVPMDMSLL) traverse the membrane as a helical segment. Position 411 (Arg411) is a topological domain, extracellular. The chain crosses the membrane as a helical span at residues 412-432 (TILAVFGKGCLSGSFSCLFLY). Topologically, residues 433–471 (TSELFPTVIRQTGMGISNVWARVGSMISPLVKITGEIQP) are cytoplasmic. The chain crosses the membrane as a helical span at residues 472 to 492 (FIPNIIYGTVALLGGSAALFL). The Extracellular segment spans residues 493–542 (PETLNQPLPETLEDMENWFLQSKKLKQEPEAEKASQRIPLQPSGPGVDRS). Over residues 518–527 (KQEPEAEKAS) the composition is skewed to basic and acidic residues. Residues 518 to 542 (KQEPEAEKASQRIPLQPSGPGVDRS) form a disordered region.

This sequence belongs to the major facilitator (TC 2.A.1) superfamily. Organic cation transporter (TC 2.A.1.19) family.

Its subcellular location is the basolateral cell membrane. It carries out the reaction estrone 3-sulfate(out) + glutarate(in) = estrone 3-sulfate(in) + glutarate(out). The catalysed reaction is estrone 3-sulfate(in) + 2-oxoglutarate(out) = estrone 3-sulfate(out) + 2-oxoglutarate(in). It catalyses the reaction glutarate(in) + 2-oxoglutarate(out) = glutarate(out) + 2-oxoglutarate(in). The enzyme catalyses urate(in) + 2-oxoglutarate(out) = urate(out) + 2-oxoglutarate(in). It carries out the reaction taurocholate(out) + glutarate(in) = taurocholate(in) + glutarate(out). The catalysed reaction is dehydroepiandrosterone 3-sulfate(out) + glutarate(in) = dehydroepiandrosterone 3-sulfate(in) + glutarate(out). It catalyses the reaction prostaglandin F2alpha(out) + glutarate(in) = prostaglandin F2alpha(in) + glutarate(out). The enzyme catalyses prostaglandin F2alpha(out) + 2-oxoglutarate(in) = prostaglandin F2alpha(in) + 2-oxoglutarate(out). It carries out the reaction (R)-carnitine(out) + 2-oxoglutarate(in) = (R)-carnitine(in) + 2-oxoglutarate(out). The catalysed reaction is glutarate(in) + (R)-carnitine(out) = glutarate(out) + (R)-carnitine(in). It catalyses the reaction prostaglandin E2(out) + 2-oxoglutarate(in) = prostaglandin E2(in) + 2-oxoglutarate(out). The enzyme catalyses prostaglandin E2(out) + glutarate(in) = prostaglandin E2(in) + glutarate(out). It carries out the reaction urate(in) + glutarate(out) = urate(out) + glutarate(in). The catalysed reaction is taurocholate(out) + 2-oxoglutarate(in) = taurocholate(in) + 2-oxoglutarate(out). It catalyses the reaction dehydroepiandrosterone 3-sulfate(out) + 2-oxoglutarate(in) = dehydroepiandrosterone 3-sulfate(in) + 2-oxoglutarate(out). The enzyme catalyses kynurenate(out) + a dicarboxylate(in) = kynurenate(in) + a dicarboxylate(out). It carries out the reaction (indol-3-yl)acetate(out) + a dicarboxylate(in) = (indol-3-yl)acetate(in) + a dicarboxylate(out). The catalysed reaction is indoxyl sulfate(out) + a dicarboxylate(in) = indoxyl sulfate(in) + a dicarboxylate(out). It catalyses the reaction N-benzoylglycine(out) + a dicarboxylate(in) = N-benzoylglycine(in) + a dicarboxylate(out). The enzyme catalyses 3-carboxy-4-methyl-5-propyl-2-furanpropanoate(out) + a dicarboxylate(in) = 3-carboxy-4-methyl-5-propyl-2-furanpropanoate(in) + a dicarboxylate(out). It carries out the reaction (6R)-L-erythro-5,6,7,8-tetrahydrobiopterin(out) + a dicarboxylate(in) = (6R)-L-erythro-5,6,7,8-tetrahydrobiopterin(in) + a dicarboxylate(out). The catalysed reaction is L-erythro-7,8-dihydrobiopterin(out) + a dicarboxylate(in) = L-erythro-7,8-dihydrobiopterin(in) + a dicarboxylate(out). It catalyses the reaction L-sepiapterin(out) + a dicarboxylate(in) = L-sepiapterin(in) + a dicarboxylate(out). Its function is as follows. Functions as an organic anion/dicarboxylate exchanger that couples organic anion uptake indirectly to the sodium gradient. Transports organic anions such as estrone 3-sulfate (E1S) and urate in exchange for dicarboxylates such as glutarate or ketoglutarate (2-oxoglutarate). Plays an important role in the excretion of endogenous and exogenous organic anions, especially from the kidney and the brain. E1S transport is pH- and chloride-dependent and may also involve E1S/cGMP exchange. Responsible for the transport of prostaglandin E2 (PGE2) and prostaglandin F2(alpha) (PGF2(alpha)) in the basolateral side of the renal tubule. Involved in the transport of neuroactive tryptophan metabolites kynurenate and xanthurenate. Functions as a biopterin transporters involved in the uptake and the secretion of coenzymes tetrahydrobiopterin (BH4), dihydrobiopterin (BH2) and sepiapterin to urine, thereby determining baseline levels of blood biopterins. May be involved in the basolateral transport of steviol, a metabolite of the popular sugar substitute stevioside. May participate in the detoxification/ renal excretion of drugs and xenobiotics, such as the histamine H(2)-receptor antagonists fexofenadine and cimetidine, the antibiotic benzylpenicillin (PCG), the anionic herbicide 2,4-dichloro-phenoxyacetate (2,4-D), the diagnostic agent p-aminohippurate (PAH), the antiviral acyclovir (ACV), and the mycotoxin ochratoxin (OTA), by transporting these exogenous organic anions across the cell membrane in exchange for dicarboxylates such as 2-oxoglutarate. Contributes to the renal uptake of potent uremic toxins (indoxyl sulfate (IS), indole acetate (IA), hippurate/N-benzoylglycine (HA) and 3-carboxy-4-methyl-5-propyl-2-furanpropionate (CMPF)), pravastatin, PCG, E1S and dehydroepiandrosterone sulfate (DHEAS), and is partly involved in the renal uptake of temocaprilat (an angiotensin-converting enzyme (ACE) inhibitor). May contribute to the release of cortisol in the adrenals. Involved in one of the detoxification systems on the choroid plexus (CP), removes substrates such as E1S or taurocholate (TC), PCG, 2,4-D and PAH, from the cerebrospinal fluid (CSF) to the blood for eventual excretion in urine and bile. Also contributes to the uptake of several other organic compounds such as the prostanoids prostaglandin E(2) and prostaglandin F(2-alpha), L-carnitine, and the therapeutic drugs allopurinol, 6-mercaptopurine (6-MP) and 5-fluorouracil (5-FU). Mediates the transport of PAH, PCG, and the statins pravastatin and pitavastatin, from the cerebrum into the blood circulation across the blood-brain barrier (BBB). In summary, plays a role in the efflux of drugs and xenobiotics, helping reduce their undesired toxicological effects on the body. This Oryctolagus cuniculus (Rabbit) protein is Organic anion transporter 3 (SLC22A8).